The chain runs to 290 residues: Phosphatidylglycerol--prolipoprotein diacylglyceryl transferase (290 aa).

7 helical membrane passes run 21 to 41, 60 to 80, 96 to 116, 124 to 144, 199 to 219, 226 to 246, and 260 to 280; these read VSLH…MWLA, LLYA…VLFY, WDGG…MLWF, FFQV…AGRL, SQLY…NVFI, GSVS…VECF, and ISMG…MMIW. A 1,2-diacyl-sn-glycero-3-phospho-(1'-sn-glycerol) is bound at residue Arg-143.

This sequence belongs to the Lgt family.

It is found in the cell inner membrane. The catalysed reaction is L-cysteinyl-[prolipoprotein] + a 1,2-diacyl-sn-glycero-3-phospho-(1'-sn-glycerol) = an S-1,2-diacyl-sn-glyceryl-L-cysteinyl-[prolipoprotein] + sn-glycerol 1-phosphate + H(+). Its pathway is protein modification; lipoprotein biosynthesis (diacylglyceryl transfer). Functionally, catalyzes the transfer of the diacylglyceryl group from phosphatidylglycerol to the sulfhydryl group of the N-terminal cysteine of a prolipoprotein, the first step in the formation of mature lipoproteins. The chain is Phosphatidylglycerol--prolipoprotein diacylglyceryl transferase from Yersinia pseudotuberculosis serotype O:1b (strain IP 31758).